The sequence spans 123 residues: Small ribosomal subunit protein uS12 (123 aa).

3-methylthioaspartic acid is present on Asp90.

It belongs to the universal ribosomal protein uS12 family. Part of the 30S ribosomal subunit. Contacts proteins S8 and S17. May interact with IF1 in the 30S initiation complex.

With S4 and S5 plays an important role in translational accuracy. In terms of biological role, interacts with and stabilizes bases of the 16S rRNA that are involved in tRNA selection in the A site and with the mRNA backbone. Located at the interface of the 30S and 50S subunits, it traverses the body of the 30S subunit contacting proteins on the other side and probably holding the rRNA structure together. The combined cluster of proteins S8, S12 and S17 appears to hold together the shoulder and platform of the 30S subunit. In Ehrlichia ruminantium (strain Gardel), this protein is Small ribosomal subunit protein uS12.